The following is an 80-amino-acid chain: Serine protease inhibitor Kazal-type 6 (80 aa).

Residues 1–23 (MKLSGMFLLLSLALFCFLTGVFS) form the signal peptide. At Q24 the chain carries Pyrrolidone carboxylic acid. The Kazal-like domain occupies 24–80 (QGGQVDCGEFQDPKVYCTRESNPHCGSDGQTYGNKCAFCKAIVKSGGKISLKHPGKC). Disulfide bonds link C30/C62, C40/C59, and C48/C80.

The protein localises to the secreted. Its function is as follows. Serine protease inhibitor selective for kallikreins. Efficiently inhibits KLK4, KLK5, KLK6, KLK7, KLK12, KLK13 and KLK14. Doesn't inhibit KLK8. This is Serine protease inhibitor Kazal-type 6 (SPINK6) from Homo sapiens (Human).